We begin with the raw amino-acid sequence, 276 residues long: Rhomboid protease GlpG (276 aa).

6 helical membrane passes run 94-114, 142-162, 169-189, 192-212, 229-249, and 250-270; these read GPVT…MQIL, ALMH…WYLG, LGSG…GYVQ, FSGP…GYVW, LIIF…GMSM, and ANGA…VDSL. Ser-201 functions as the Nucleophile in the catalytic mechanism. Residue His-254 is part of the active site.

It belongs to the peptidase S54 family.

It is found in the cell inner membrane. It catalyses the reaction Cleaves type-1 transmembrane domains using a catalytic dyad composed of serine and histidine that are contributed by different transmembrane domains.. Rhomboid-type serine protease that catalyzes intramembrane proteolysis. This is Rhomboid protease GlpG from Escherichia fergusonii (strain ATCC 35469 / DSM 13698 / CCUG 18766 / IAM 14443 / JCM 21226 / LMG 7866 / NBRC 102419 / NCTC 12128 / CDC 0568-73).